The primary structure comprises 1188 residues: F-box only protein 38 (1188 aa).

Positions 30 to 75 (MNQLSHEVLCHIFRYLPLQDIMCMECLSRKLKEAVTLYLRVVRVVD) constitute an F-box domain. Residues 59 to 119 (KLKEAVTLYL…LHPRYLERRR (61 aa)) form an interaction with KLF7 region. 3 consecutive short sequence motifs (nuclear export signal) follow at residues 194-201 (LHLVGVNV), 307-316 (LEVDLGYLII), and 451-460 (LLPSLEFISL). A disordered region spans residues 487–526 (ALVSNQNSNNDDNNAQNNNANIHDNNHHHPDDSDEENDFR). The segment covering 491–509 (NQNSNNDDNNAQNNNANIH) has biased composition (low complexity). Phosphothreonine is present on threonine 591. Phosphoserine is present on residues serine 598, serine 600, and serine 606. Disordered stretches follow at residues 620-666 (RRYS…FPLE), 685-766 (MKAA…MEEG), and 787-909 (RTSR…STSD). Basic and acidic residues-rich tracts occupy residues 621–630 (RYSEREEKTG) and 685–699 (MKAARDIPEKKKNKD). Positions 703–740 (SCSSTTASTVGNSSSHNTASQSPDFVRTVNSGGSSEPS) are enriched in polar residues. A phosphoserine mark is found at serine 736 and serine 740. The segment covering 787 to 798 (RTSRCSDEERPS) has biased composition (basic and acidic residues). A compositionally biased stretch (polar residues) spans 849–861 (SSQPESCDVQSNE). Residues 889 to 900 (TKPRHAMKRKRT) show a composition bias toward basic residues. Residues 896 to 899 (KRKR) carry the Nuclear localization signal motif.

In terms of assembly, part of the SCF (SKP1-CUL1-F-box) E3 ubiquitin-protein ligase complex SCF(FBXO38) composed of CUL1, SKP1, RBX1 and FBXO38. Interacts with KLF7. Interacts with PDCD1/PD-1.

The protein resides in the cytoplasm. It is found in the cytosol. It localises to the nucleus. The protein operates within protein modification; protein ubiquitination. Functionally, substrate recognition component of a SCF (SKP1-CUL1-F-box protein) E3 ubiquitin-protein ligase complex which mediates the ubiquitination and subsequent proteasomal degradation of PDCD1/PD-1, thereby regulating T-cells-mediated immunity. Required for anti-tumor activity of T-cells by promoting the degradation of PDCD1/PD-1; the PDCD1-mediated inhibitory pathway being exploited by tumors to attenuate anti-tumor immunity and facilitate tumor survival. May indirectly stimulate the activity of transcription factor KLF7, a regulator of neuronal differentiation, without promoting KLF7 ubiquitination. This is F-box only protein 38 from Homo sapiens (Human).